The primary structure comprises 166 residues: uncharacterized protein (166 aa).

The chain crosses the membrane as a helical span at residues 34 to 54 (FWGKVLVLTFGIICVVFVIFM). 2 disordered regions span residues 73 to 93 (QRTQHSIHRRERSSSGASQQF) and 123 to 166 (TSTP…NDEV).

The protein resides in the vacuole membrane. This is an uncharacterized protein from Schizosaccharomyces pombe (strain 972 / ATCC 24843) (Fission yeast).